The sequence spans 117 residues: Glycine cleavage system H-like protein (117 aa).

The 83-residue stretch at 21–103 (IVRLGLSSRM…ESEGWFVVLQ (83 aa)) folds into the Lipoyl-binding domain. Position 62 is an N6-lipoyllysine (Lys62).

Belongs to the GcvH family. (R)-lipoate serves as cofactor.

The chain is Glycine cleavage system H-like protein from Chlamydia muridarum (strain MoPn / Nigg).